We begin with the raw amino-acid sequence, 215 residues long: Eukaryotic translation initiation factor 4E-1 (215 aa).

Residues 1-32 form a disordered region; the sequence is MAEDTETRPASAGAEEREEGEIADDGDGSSAA. Residues 16 to 27 show a composition bias toward acidic residues; it reads EREEGEIADDGD. EIF4G-binding regions lie at residues 40-43 and 50-86; these read HPLE and FDNPQGKSRQVAWGSTIHPIHTFSTVEDFWGLYNNIH. MRNA contacts are provided by residues 58–63, lysine 90, and 108–109; these read RQVAWG and WE. An intrachain disulfide couples cysteine 113 to cysteine 151. Positions 134-143 are EIF4G-binding; sequence HTLLAMIGEQ. MRNA contacts are provided by residues 158 to 163 and 203 to 207; these read RQKQER and KRSDK.

It belongs to the eukaryotic initiation factor 4E family. In terms of assembly, EIF4F is a multi-subunit complex, the composition of which varies with external and internal environmental conditions. It is composed of at least EIF4A, EIF4E and EIF4G. EIF4E is also known to interact with other partners. In higher plants two isoforms of EIF4F have been identified, named isoform EIF4F and isoform EIF(iso)4F. Isoform EIF4F has subunits p220 and p26, whereas isoform EIF(iso)4F has subunits p82 and p28. Post-translationally, according to the redox status, the Cys-113-Cys-151 disulfide bridge may have a role in regulating protein function by affecting its ability to bind capped mRNA.

Its subcellular location is the nucleus. It localises to the cytoplasm. In terms of biological role, component of the protein complex eIF4F, which is involved in the recognition of the mRNA cap, ATP-dependent unwinding of 5'-terminal secondary structure and recruitment of mRNA to the ribosome. Recognizes and binds the 7-methylguanosine-containing mRNA cap during an early step in the initiation of protein synthesis and facilitates ribosome binding by inducing the unwinding of the mRNAs secondary structures. In Triticum aestivum (Wheat), this protein is Eukaryotic translation initiation factor 4E-1.